A 310-amino-acid polypeptide reads, in one-letter code: HMG box-containing protein C28F2.11 (310 aa).

Low complexity predominate over residues Glu-69–Val-95. A disordered region spans residues Glu-69–Asn-310. A Phosphoserine modification is found at Ser-70. Thr-105 carries the phosphothreonine modification. Positions Pro-117–Asn-187 form a DNA-binding region, HMG box. 2 stretches are compositionally biased toward basic and acidic residues: residues Gln-131–Ala-178 and Val-200–Glu-226. Residues Ser-161, Ser-214, and Ser-215 each carry the phosphoserine modification. Thr-217 and Thr-237 each carry phosphothreonine. The segment covering Ser-255–Pro-268 has biased composition (polar residues). Phosphoserine occurs at positions 271, 278, 294, 295, and 297. A phosphothreonine mark is found at Thr-302 and Thr-305.

The protein localises to the cytoplasm. In Schizosaccharomyces pombe (strain 972 / ATCC 24843) (Fission yeast), this protein is HMG box-containing protein C28F2.11.